We begin with the raw amino-acid sequence, 488 residues long: Probable aldehyde dehydrogenase (488 aa).

Gly240–Gly245 lines the NAD(+) pocket. Catalysis depends on residues Glu262 and Cys296.

The protein belongs to the aldehyde dehydrogenase family.

It carries out the reaction an aldehyde + NAD(+) + H2O = a carboxylate + NADH + 2 H(+). Its function is as follows. Involved in an alpha-terpineol oxidation system. The protein is Probable aldehyde dehydrogenase (terPE) of Pseudomonas sp.